A 110-amino-acid chain; its full sequence is Large ribosomal subunit protein eL30 (110 aa).

The protein belongs to the eukaryotic ribosomal protein eL30 family.

The sequence is that of Large ribosomal subunit protein eL30 (rpl30e) from Methanocaldococcus jannaschii (strain ATCC 43067 / DSM 2661 / JAL-1 / JCM 10045 / NBRC 100440) (Methanococcus jannaschii).